Reading from the N-terminus, the 229-residue chain is Ras-related protein RabZ (229 aa).

Residues 1 to 39 (MGCFHSREPTATGKTKKEEPTSAVKTNKEEKSSNYVSEP) form a disordered region. The N-myristoyl glycine moiety is linked to residue G2. C3 carries S-palmitoyl cysteine lipidation. The span at 15 to 32 (TKKEEPTSAVKTNKEEKS) shows a compositional bias: basic and acidic residues. 57-64 (GDQATGKS) lines the GTP pocket. The Effector region motif lies at 79 to 88 (HKPSPIIIDC). GTP-binding positions include 106 to 110 (DTAGQ) and 164 to 167 (NKCD).

It belongs to the small GTPase superfamily. Rab family. Although this sequence lacks the C-terminal cysteine motifs subject to isoprenylation in other Rab proteins, it does have N-terminal myristoylation and S-palmitoylation sequence motifs.

The chain is Ras-related protein RabZ (rabZ) from Dictyostelium discoideum (Social amoeba).